The primary structure comprises 159 residues: Cyclic pyranopterin monophosphate synthase (159 aa).

Substrate is bound by residues 75–77 and 113–114; these read LCH and ME. Aspartate 128 is a catalytic residue.

Belongs to the MoaC family. Homohexamer; trimer of dimers.

It carries out the reaction (8S)-3',8-cyclo-7,8-dihydroguanosine 5'-triphosphate = cyclic pyranopterin phosphate + diphosphate. The protein operates within cofactor biosynthesis; molybdopterin biosynthesis. Catalyzes the conversion of (8S)-3',8-cyclo-7,8-dihydroguanosine 5'-triphosphate to cyclic pyranopterin monophosphate (cPMP). In Vibrio vulnificus (strain YJ016), this protein is Cyclic pyranopterin monophosphate synthase.